A 541-amino-acid chain; its full sequence is Paromamine 6'-oxidase (541 aa).

Residues 1–29 (MKRLRGTLPSDARHAWHPEPLGPAHRDGW) form a disordered region. Catalysis depends on His470, which acts as the Proton acceptor.

This sequence belongs to the GMC oxidoreductase family. It depends on FAD as a cofactor.

It catalyses the reaction 6'''-deamino-6'''-hydroxyneomycin C + O2 = 6'''-deamino-6'''-oxoneomycin C + H2O2. The enzyme catalyses paromamine + O2 = 6'-oxoparomamine + H2O2. The protein operates within antibiotic biosynthesis; neomycin biosynthesis. In terms of biological role, glucosaminyl-6'-oxidase involved in the biosynthetic pathway of neomycin by mediating FAD-dependent dehydrogenation of paromamine to 6'-dehydro-6'-oxoparomamine. Works in combination with neamine transaminase to replace the 6-hydroxy group of paromamine with an amino group. Also able to collaborate with neomycin C transaminase to replace the 6'''-hydroxy group of 6'''-hydroxyneomycin C with an amino group. The sequence is that of Paromamine 6'-oxidase (neoG) from Streptomyces fradiae (Streptomyces roseoflavus).